Reading from the N-terminus, the 341-residue chain is MSATEKRRYEVLRAIVADYIASQEPVGSKSLLERHKLNVSSATIRNDMSVLESDGFIVQEHASSGRVPTERGYRLFVDSIHDIKPLSLAERRAILGFLEGGVDLEDVLRRSVQLLSQLTHQAAVVQLPTLKTARVKHCEVVPLSPMRLLLVLITDTGRVDQRNVELEEPLAAEEVNVLRDLLNGALGEKTLTAASDALEELAQQAPTDIRDAMRRCCDVLVNTLVDQPSDRLILAGTSNLTRLSRETSASLPMVLEALEEQVVMLKLLSNVTDLDQVRVHIGGENEDIELRSATVITTGYGSQGSALGGLGVVGPTYMDYSGTISKVSAVAKYVGRVLAGE.

This sequence belongs to the HrcA family.

Negative regulator of class I heat shock genes (grpE-dnaK-dnaJ and groELS operons). Prevents heat-shock induction of these operons. This Corynebacterium glutamicum (strain ATCC 13032 / DSM 20300 / JCM 1318 / BCRC 11384 / CCUG 27702 / LMG 3730 / NBRC 12168 / NCIMB 10025 / NRRL B-2784 / 534) protein is Heat-inducible transcription repressor HrcA.